The sequence spans 1044 residues: Ribonucleoside-diphosphate reductase subunit alpha (1044 aa).

3 consecutive ATP-cone domains span residues 9–111 (YTIV…KAER), 118–217 (IAII…ARAR), and 235–325 (YVVQ…ETLG). Substrate-binding positions include threonine 440, 455 to 456 (SC), glycine 484, 668 to 672 (NLCTE), and 855 to 859 (PTATI). An intrachain disulfide couples cysteine 456 to cysteine 685. The active-site Proton acceptor is asparagine 668. Cysteine 670 acts as the Cysteine radical intermediate in catalysis. The active-site Proton acceptor is glutamate 672.

This sequence belongs to the ribonucleoside diphosphate reductase large chain family. In terms of assembly, tetramer of two alpha and two beta subunits.

It carries out the reaction a 2'-deoxyribonucleoside 5'-diphosphate + [thioredoxin]-disulfide + H2O = a ribonucleoside 5'-diphosphate + [thioredoxin]-dithiol. With respect to regulation, under complex allosteric control mediated by deoxynucleoside triphosphates and ATP binding. The type of nucleotide bound at the specificity site determines substrate preference. It seems probable that ATP makes the enzyme reduce CDP and UDP, dGTP favors ADP reduction and dTTP favors GDP reduction. In terms of biological role, provides the precursors necessary for DNA synthesis. Catalyzes the biosynthesis of deoxyribonucleotides from the corresponding ribonucleotides. The sequence is that of Ribonucleoside-diphosphate reductase subunit alpha (nrdA) from Chlamydia pneumoniae (Chlamydophila pneumoniae).